The primary structure comprises 606 residues: V-type proton ATPase catalytic subunit A (606 aa).

239-246 contributes to the ATP binding site; the sequence is GAFGCGKT.

The protein belongs to the ATPase alpha/beta chains family. V-ATPase is a heteromultimeric enzyme made up of two complexes: the ATP-hydrolytic V1 complex and the proton translocation V0 complex. The V1 complex consists of three catalytic AB heterodimers that form a heterohexamer, three peripheral stalks each consisting of EG heterodimers, one central rotor including subunits D and F, and the regulatory subunits C and H. The proton translocation complex V0 consists of the proton transport subunit a, a ring of proteolipid subunits c9c'', rotary subunit d, subunits e and f, and the accessory subunits vah-19/Ac45 and vah-20/PRR.

It carries out the reaction ATP + H2O + 4 H(+)(in) = ADP + phosphate + 5 H(+)(out). Functionally, catalytic subunit of the V1 complex of vacuolar(H+)-ATPase (V-ATPase), a multisubunit enzyme composed of a peripheral complex (V1) that hydrolyzes ATP and a membrane integral complex (V0) that translocates protons. V-ATPase is responsible for acidifying and maintaining the pH of intracellular compartments and in some cell types, is targeted to the plasma membrane, where it is responsible for acidifying the extracellular environment. Required along with other vacuolar ATPase components for the removal of protein aggregates which form in immature oocytes in the distal gonad. This removal occurs as the oocytes mature and move to the proximal gonad, is triggered by the introduction of sperm through mating and occurs before fertilization. The introduction of sperm triggers V-ATPase accumulation in proximal oocytes and induces lysosomal acidification which leads to engulfing of protein aggregates by lysosomes and subsequent clearance of the aggregates. Lysosomal acidification also leads to changes in mitochondrial morphology and function. Mitochondria in distal immature oocytes are fragmented, produce high levels of reactive oxygen species (ROS) and have high membrane potential, indicative of metabolic inactivity. In contrast, mitochondria in proximal mature oocytes are tubular with lower ROS levels and membrane potential, indicative of an active metabolic state required for aggregate mobilization before clearance. Involved in receptor-mediated endocytosis. This is V-type proton ATPase catalytic subunit A from Caenorhabditis briggsae.